A 129-amino-acid chain; its full sequence is Fluoride-specific ion channel FluC 2 (129 aa).

4 consecutive transmembrane segments (helical) span residues 4-24 (LDVMWVCLGGGVGSLGRWWIG), 39-59 (TFLINISGAFVIGYLSVLFGV), 65-85 (YGTMLNAGVLTGILGGYTTFS), and 104-124 (VFYLVASVLSGLFAAWLGAML). 2 residues coordinate Na(+): Gly-79 and Thr-82.

Belongs to the fluoride channel Fluc/FEX (TC 1.A.43) family.

The protein resides in the cell inner membrane. It catalyses the reaction fluoride(in) = fluoride(out). With respect to regulation, na(+) is not transported, but it plays an essential structural role and its presence is essential for fluoride channel function. Its function is as follows. Fluoride-specific ion channel. Important for reducing fluoride concentration in the cell, thus reducing its toxicity. The polypeptide is Fluoride-specific ion channel FluC 2 (Brucella abortus biovar 1 (strain 9-941)).